A 481-amino-acid polypeptide reads, in one-letter code: UDP-glycosyltransferase 88F4 (481 aa).

UDP-alpha-D-glucose contacts are provided by residues Ser288, 357–358 (WA), 375–383 (HCGWNSVLE), and 397–400 (YAEQ).

The protein belongs to the UDP-glycosyltransferase family.

In terms of biological role, glycosyltransferase that may possess chalcone and dihydrochalcone 2'-O-glucosyltransferase activity. This Malus domestica (Apple) protein is UDP-glycosyltransferase 88F4.